Here is a 601-residue protein sequence, read N- to C-terminus: MAGAAGPGSGPGAAGGDGDDSLYPIAVLIDELRNEDVQLRLNSIKKLSTIALALGVERTRTELLPFLTDTIYDEDEVLLALAEQLGNFTGLVGGPDFAHCLLPPLESLATVEETVVRDKAVESLRQISQEHTPVALEAHFVPLVKRLASGDWFTSRTSACGLFSVCYPRASNAVKAEIRQHFRSLCSDDTPMVRRAAASKLGEFAKVLELDSVKTEIVPLFTNLASDEQDSVRLLAVEACVSIAQLLSQEDLEALVMPTLRQAAEDKSWRVRYMVADKFSELQKAVGPKIALSDLIPAFQSLLRDCEAEVRAAAAHKVRELCENLPAEGRETVIMNQILPYIKELVSDTNQHVKSALASVIMGLSTVLGKENTIEHLLPLFLAQLKDECPEVRLNIISNLDCVNEVIGIRQLSQSLLPAIVELAEDAKWRVRLAIIEYMPLLAGQLGVEFFDEKLNSLCMAWLVDHVYAIREAATNNLMKLVQKFGTEWAQNTIVPKVLVMANDPNYLHRMTTLFCINALSEACGKEITTKQMLPIVLKMAGDQVANVRFNVAKSLQKIGPILDTNALQGEVKPVLQKLGQDEDMDVKYFAQEAISVLALA.

N-acetylalanine is present on Ala-2. HEAT repeat units lie at residues Asp-20–Arg-58, Thr-59–Asp-96, Phe-97–Ala-135, Leu-136–Ala-173, Val-174–Ser-212, Val-213–Asp-251, Leu-252–Ile-290, Ala-291–Val-333, Ile-334–Asn-372, Thr-373–Gln-411, Leu-412–Phe-450, Phe-451–Trp-489, Ala-490–Ile-528, Thr-529–Ala-567, and Leu-568–Ala-601.

The protein belongs to the phosphatase 2A regulatory subunit A family. PP2A consists of a common heterodimeric core enzyme, composed of a 36 kDa catalytic subunit (subunit C) and a 65 kDa constant regulatory subunit (PR65 or subunit A), that associates with a variety of regulatory subunits. Proteins that associate with the core dimer include three families of regulatory subunits B (the R2/B/PR55/B55, R3/B''/PR72/PR130/PR59 and R5/B'/B56 families), the 48 kDa variable regulatory subunit, viral proteins, and cell signaling molecules. Interacts with IPO9. Interacts with SGO1. Interacts with RAF1.

Functionally, the PR65 subunit of protein phosphatase 2A serves as a scaffolding molecule to coordinate the assembly of the catalytic subunit and a variable regulatory B subunit. This chain is Serine/threonine-protein phosphatase 2A 65 kDa regulatory subunit A beta isoform (Ppp2r1b), found in Mus musculus (Mouse).